A 363-amino-acid chain; its full sequence is Uroporphyrinogen decarboxylase (363 aa).

Substrate-binding positions include arginine 27–arginine 31, aspartate 77, tyrosine 157, threonine 212, and histidine 333.

Belongs to the uroporphyrinogen decarboxylase family. Homodimer.

It is found in the cytoplasm. The catalysed reaction is uroporphyrinogen III + 4 H(+) = coproporphyrinogen III + 4 CO2. It participates in porphyrin-containing compound metabolism; protoporphyrin-IX biosynthesis; coproporphyrinogen-III from 5-aminolevulinate: step 4/4. Functionally, catalyzes the decarboxylation of four acetate groups of uroporphyrinogen-III to yield coproporphyrinogen-III. This is Uroporphyrinogen decarboxylase from Cupriavidus necator (strain ATCC 17699 / DSM 428 / KCTC 22496 / NCIMB 10442 / H16 / Stanier 337) (Ralstonia eutropha).